A 221-amino-acid chain; its full sequence is Probable septum site-determining protein MinC (221 aa).

Belongs to the MinC family. In terms of assembly, interacts with MinD and FtsZ.

Functionally, cell division inhibitor that blocks the formation of polar Z ring septums. Rapidly oscillates between the poles of the cell to destabilize FtsZ filaments that have formed before they mature into polar Z rings. Prevents FtsZ polymerization. The polypeptide is Probable septum site-determining protein MinC (Shewanella loihica (strain ATCC BAA-1088 / PV-4)).